The following is a 273-amino-acid chain: 3-methyl-2-oxobutanoate hydroxymethyltransferase 1 (273 aa).

Mg(2+) is bound by residues D49 and D88. 3-methyl-2-oxobutanoate is bound by residues 49-50 (DS), D88, and K118. E120 serves as a coordination point for Mg(2+). E187 serves as the catalytic Proton acceptor.

This sequence belongs to the PanB family. Homodecamer; pentamer of dimers. Mg(2+) serves as cofactor.

It is found in the cytoplasm. The catalysed reaction is 3-methyl-2-oxobutanoate + (6R)-5,10-methylene-5,6,7,8-tetrahydrofolate + H2O = 2-dehydropantoate + (6S)-5,6,7,8-tetrahydrofolate. Its pathway is cofactor biosynthesis; (R)-pantothenate biosynthesis; (R)-pantoate from 3-methyl-2-oxobutanoate: step 1/2. Its function is as follows. Catalyzes the reversible reaction in which hydroxymethyl group from 5,10-methylenetetrahydrofolate is transferred onto alpha-ketoisovalerate to form ketopantoate. This chain is 3-methyl-2-oxobutanoate hydroxymethyltransferase 1, found in Pseudomonas aeruginosa (strain UCBPP-PA14).